Consider the following 177-residue polypeptide: tRNA (cytidine(56)-2'-O)-methyltransferase (177 aa).

S-adenosyl-L-methionine-binding positions include Leu-84 and 109–113 (GAEKV).

Belongs to the aTrm56 family. In terms of assembly, homodimer.

Its subcellular location is the cytoplasm. It catalyses the reaction cytidine(56) in tRNA + S-adenosyl-L-methionine = 2'-O-methylcytidine(56) in tRNA + S-adenosyl-L-homocysteine + H(+). Functionally, specifically catalyzes the AdoMet-dependent 2'-O-ribose methylation of cytidine at position 56 in tRNAs. The sequence is that of tRNA (cytidine(56)-2'-O)-methyltransferase from Methanosarcina mazei (strain ATCC BAA-159 / DSM 3647 / Goe1 / Go1 / JCM 11833 / OCM 88) (Methanosarcina frisia).